The primary structure comprises 251 residues: 5-oxoprolinase subunit A 3 (251 aa).

The protein belongs to the LamB/PxpA family. As to quaternary structure, forms a complex composed of PxpA, PxpB and PxpC.

The enzyme catalyses 5-oxo-L-proline + ATP + 2 H2O = L-glutamate + ADP + phosphate + H(+). Its function is as follows. Catalyzes the cleavage of 5-oxoproline to form L-glutamate coupled to the hydrolysis of ATP to ADP and inorganic phosphate. This chain is 5-oxoprolinase subunit A 3, found in Pseudomonas aeruginosa (strain ATCC 15692 / DSM 22644 / CIP 104116 / JCM 14847 / LMG 12228 / 1C / PRS 101 / PAO1).